A 107-amino-acid chain; its full sequence is Integration host factor subunit beta (107 aa).

The interval Phe-76–Arg-107 is disordered. The segment covering Pro-82 to Asp-101 has biased composition (basic and acidic residues).

Belongs to the bacterial histone-like protein family. Heterodimer of an alpha and a beta chain.

Its function is as follows. This protein is one of the two subunits of integration host factor, a specific DNA-binding protein that functions in genetic recombination as well as in transcriptional and translational control. The chain is Integration host factor subunit beta from Burkholderia cenocepacia (strain ATCC BAA-245 / DSM 16553 / LMG 16656 / NCTC 13227 / J2315 / CF5610) (Burkholderia cepacia (strain J2315)).